We begin with the raw amino-acid sequence, 273 residues long: DnaJ homolog subfamily C member 27 (273 aa).

The interval 1–18 is required for interaction with MAPK1; that stretch reads MEASMPKRKEPGKSLRIK. GTP is bound by residues 23 to 30, 71 to 75, and 134 to 137; these read GNAEVGKS, DMAGD, and NKID. A J domain is found at 217–273; that stretch reads DSWDMLGVKPGASRDEVNKAYRKLAVLLHPDKCVAPGSEDAFKAVVNARTALLKNIK.

The protein belongs to the small GTPase superfamily. Rab family. Interacts directly with MAPK1 (wild-type and kinase-deficient forms). Interacts directly (in GTP-bound form) with MAP2K1 (wild-type and kinase-deficient forms).

It is found in the nucleus. GTPase which can activate the MEK/ERK pathway and induce cell transformation when overexpressed. May act as a nuclear scaffold for MAPK1, probably by association with MAPK1 nuclear export signal leading to enhanced ERK1/ERK2 signaling. This Bos taurus (Bovine) protein is DnaJ homolog subfamily C member 27 (DNAJC27).